The sequence spans 300 residues: Junctional adhesion molecule A (300 aa).

The first 26 residues, 1 to 26 (MGTEGKAGRKLLFLFTSMILGSLVQG), serve as a signal peptide directing secretion. Residues 27-238 (KGSVYTAQSD…MDAVELNVGG (212 aa)) are Extracellular-facing. Ig-like V-type domains lie at 28-122 (GSVY…GEVS) and 134-230 (PTIS…AHMD). Asparagine 42 carries an N-linked (GlcNAc...) asparagine glycan. 2 disulfide bridges follow: cysteine 49-cysteine 108 and cysteine 152-cysteine 212. Residue asparagine 185 is glycosylated (N-linked (GlcNAc...) asparagine). The helical transmembrane segment at 239-259 (IVAAVLVTLILLGLLIFGVWF) threads the bilayer. The Cytoplasmic portion of the chain corresponds to 260 to 299 (AYSRGYFERTKKGTAPGKKVIYSQPSTRSEGEFKQTSSFL). Phosphoserine is present on residues serine 282, serine 285, and serine 288.

The protein belongs to the immunoglobulin superfamily. In terms of assembly, interacts with the ninth PDZ domain of MPDZ. Interacts with the first PDZ domain of PARD3. The association between PARD3 and PARD6B probably disrupts this interaction. Interacts with ITGAL (via I-domain). Interacts with CD151.

The protein resides in the cell junction. Its subcellular location is the tight junction. The protein localises to the cell membrane. Functionally, seems to play a role in epithelial tight junction formation. Appears early in primordial forms of cell junctions and recruits PARD3. The association of the PARD6-PARD3 complex may prevent the interaction of PARD3 with JAM1, thereby preventing tight junction assembly. Plays a role in regulating monocyte transmigration involved in integrity of epithelial barrier. Ligand for integrin alpha-L/beta-2 involved in memory T-cell and neutrophil transmigration. Involved in platelet activation. The chain is Junctional adhesion molecule A (F11r) from Mus musculus (Mouse).